Consider the following 664-residue polypeptide: Degenerin del-1 (664 aa).

The Cytoplasmic segment spans residues 1–67 (MARKYIDILK…IFTTSLYWVR (67 aa)). Residues 68 to 88 (FLWVVVSLVCICLCMYSFSHV) form a helical membrane-spanning segment. Over 89-607 (KDKYDRKEKI…WFNLMADMGG (519 aa)) the chain is Extracellular. 5 N-linked (GlcNAc...) asparagine glycosylation sites follow: Asn-241, Asn-300, Asn-394, Asn-508, and Asn-562. Residues 608–628 (QAGLFLGASIMSVIEFLFFAV) traverse the membrane as a helical segment. Residues 629–664 (RTLGIACKPRRWRQKTELLRAEELNDAEKGVSTNNN) lie on the Cytoplasmic side of the membrane.

It belongs to the amiloride-sensitive sodium channel (TC 1.A.6) family.

The protein localises to the membrane. Functionally, probable sodium channel subunit. This Caenorhabditis elegans protein is Degenerin del-1 (del-1).